The sequence spans 289 residues: 3-methyl-2-oxobutanoate hydroxymethyltransferase (289 aa).

D50 and D89 together coordinate Mg(2+). 3-methyl-2-oxobutanoate-binding positions include 50–51, D89, and K119; that span reads DS. E121 serves as a coordination point for Mg(2+). The active-site Proton acceptor is E188. The tract at residues 266–289 is disordered; that stretch reads AQHSFGMPEDEQRRWEENVSGADD.

Belongs to the PanB family. As to quaternary structure, homodecamer; pentamer of dimers. Mg(2+) is required as a cofactor.

Its subcellular location is the cytoplasm. The catalysed reaction is 3-methyl-2-oxobutanoate + (6R)-5,10-methylene-5,6,7,8-tetrahydrofolate + H2O = 2-dehydropantoate + (6S)-5,6,7,8-tetrahydrofolate. The protein operates within cofactor biosynthesis; (R)-pantothenate biosynthesis; (R)-pantoate from 3-methyl-2-oxobutanoate: step 1/2. In terms of biological role, catalyzes the reversible reaction in which hydroxymethyl group from 5,10-methylenetetrahydrofolate is transferred onto alpha-ketoisovalerate to form ketopantoate. In Oleidesulfovibrio alaskensis (strain ATCC BAA-1058 / DSM 17464 / G20) (Desulfovibrio alaskensis), this protein is 3-methyl-2-oxobutanoate hydroxymethyltransferase.